Consider the following 434-residue polypeptide: Ribosomal protein uS12 methylthiotransferase RimO (434 aa).

Residues A2 to P112 form the MTTase N-terminal domain. [4Fe-4S] cluster-binding residues include C11, C47, C76, C142, C146, and C149. The 238-residue stretch at L128 to R365 folds into the Radical SAM core domain. In terms of domain architecture, TRAM spans Q368–A434.

Belongs to the methylthiotransferase family. RimO subfamily. [4Fe-4S] cluster serves as cofactor.

Its subcellular location is the cytoplasm. It catalyses the reaction L-aspartate(89)-[ribosomal protein uS12]-hydrogen + (sulfur carrier)-SH + AH2 + 2 S-adenosyl-L-methionine = 3-methylsulfanyl-L-aspartate(89)-[ribosomal protein uS12]-hydrogen + (sulfur carrier)-H + 5'-deoxyadenosine + L-methionine + A + S-adenosyl-L-homocysteine + 2 H(+). Functionally, catalyzes the methylthiolation of an aspartic acid residue of ribosomal protein uS12. This is Ribosomal protein uS12 methylthiotransferase RimO from Thermus thermophilus (strain ATCC 27634 / DSM 579 / HB8).